The chain runs to 1001 residues: Receptor-type tyrosine-protein phosphatase N2 (1001 aa).

Residues 1–27 (MGPPLPLLLLLLLPPPLPRALPAPASA) form the signal peptide. An involved in localization to secretory granules; interaction with CPE region spans residues 1–407 (MGPPLPLLLL…PEGPLLEKSS (407 aa)). At 28-600 (RGRQLPGRLG…HQEEQEDSTK (573 aa)) the chain is on the extracellular side. Omega-N-methylarginine is present on R259. Disordered regions lie at residues 271–296 (PFSA…SMDD), 308–359 (QQNS…DAPE), and 394–459 (SPLL…LEDQ). Positions 312–325 (EVDRLGPLKEEKAD) are enriched in basic and acidic residues. Phosphoserine is present on S339. The span at 340–355 (QESHGRGAEGQPREQT) shows a compositional bias: basic and acidic residues. Residues 394–404 (SPLLPEGPLLE) show a composition bias toward low complexity. The segment covering 405-416 (KSSREEIKKSEQ) has biased composition (basic and acidic residues). Acidic residues predominate over residues 417 to 428 (PEEVLSSEEETA). Residues S422 and S423 each carry the phosphoserine modification. Over residues 429 to 459 (GVEHVRSRTYSKDLFERKPNSEPQPRRLEDQ) the composition is skewed to basic and acidic residues. N550 carries an N-linked (GlcNAc...) asparagine glycan. Residues 601–621 (FILLTFLSIACILGVLLASSL) form a helical membrane-spanning segment. At 622–1001 (AYCLRHNSHY…VNAILKALPQ (380 aa)) the chain is on the cytoplasmic side. Positions 652–661 (YQELCRQRMA) match the Tyrosine-based internalization motif motif. Residues 663 to 705 (RPQDRSEGPHTSRINSVSSQFSDGPMPSPSARSSTSSWSEEPV) are disordered. Residues 674–684 (SRINSVSSQFS) show a composition bias toward polar residues. Phosphoserine occurs at positions 678 and 684. A compositionally biased stretch (low complexity) spans 691–705 (PSARSSTSSWSEEPV). T697 is modified (phosphothreonine). The Tyrosine-protein phosphatase domain maps to 731 to 991 (LEKEWEALCA…EFALTAVAEE (261 aa)). Residues D899 and 931-937 (CSDGAGR) each bind substrate. C931 functions as the Phosphocysteine intermediate in the catalytic mechanism. K956 carries the N6-acetyllysine modification. Q976 is a binding site for substrate. The Leucine-based sorting signal motif lies at 990-996 (EEVNAIL).

It belongs to the protein-tyrosine phosphatase family. In terms of assembly, self-associates. Interacts (via cytoplasmic domain) with PTPRN (via cytoplasmic domain). Interacts (precursor form) with CPE. Interacts with HAP1 isoform A. Interacts with AP2A1 or AP2A2 and AP1G1; indicative for an association with adaptor protein complex 2 (AP-2) and adaptor protein complex 1 (AP-1). Interacts with AP2M1; indicative for an association with adaptor protein complex 2 (AP-2). Interacts with MYO5A. Post-translationally, subject to proteolytic cleavage at multiple sites during maturation of secretory granules. In the brain at least IA-2beta71, IA-2beta64 and IA-2beta60 have been detected, in the pancreas and a pancreatic beta cell line only IA-2beta60 has been detected. In terms of tissue distribution, detected in brain. Detected in pancreas islets (at protein level). Detected in pancreas and brain.

The protein resides in the cytoplasmic vesicle. It localises to the secretory vesicle membrane. Its subcellular location is the secretory vesicle. The protein localises to the synaptic vesicle membrane. The enzyme catalyses O-phospho-L-tyrosyl-[protein] + H2O = L-tyrosyl-[protein] + phosphate. Plays a role in vesicle-mediated secretory processes. Required for normal accumulation of secretory vesicles in hippocampus, pituitary and pancreatic islets. Required for the accumulation of normal levels of insulin-containing vesicles and preventing their degradation. Plays a role in insulin secretion in response to glucose stimuli. Required for normal accumulation of the neurotransmitters norepinephrine, dopamine and serotonin in the brain. In females, but not in males, required for normal accumulation and secretion of pituitary hormones, such as luteinizing hormone (LH) and follicle-stimulating hormone (FSH). Required to maintain normal levels of renin expression and renin release. May regulate catalytic active protein-tyrosine phosphatases such as PTPRA through dimerization. Has phosphatidylinositol phosphatase activity; the PIPase activity is involved in its ability to regulate insulin secretion. Can dephosphorylate phosphatidylinositol 4,5-biphosphate (PI(4,5)P2), phosphatidylinositol 5-phosphate and phosphatidylinositol 3-phosphate. Regulates PI(4,5)P2 level in the plasma membrane and localization of cofilin at the plasma membrane and thus is indirectly involved in regulation of actin dynamics related to cell migration and metastasis; upon hydrolysis of PI(4,5)P2 cofilin is released from the plasma membrane and acts in the cytoplasm in severing F-actin filaments. The chain is Receptor-type tyrosine-protein phosphatase N2 (Ptprn2) from Mus musculus (Mouse).